The following is a 945-amino-acid chain: Leucine--tRNA ligase (945 aa).

A 'HIGH' region motif is present at residues 43-53 (PYPNGAIHIGH). A 'KMSKS' region motif is present at residues 638 to 642 (KMSKS). Lys641 provides a ligand contact to ATP.

The protein belongs to the class-I aminoacyl-tRNA synthetase family.

The protein resides in the cytoplasm. The catalysed reaction is tRNA(Leu) + L-leucine + ATP = L-leucyl-tRNA(Leu) + AMP + diphosphate. The chain is Leucine--tRNA ligase from Pyrobaculum neutrophilum (strain DSM 2338 / JCM 9278 / NBRC 100436 / V24Sta) (Thermoproteus neutrophilus).